Here is a 430-residue protein sequence, read N- to C-terminus: Asparagine--tRNA ligase (430 aa).

It belongs to the class-II aminoacyl-tRNA synthetase family. In terms of assembly, homodimer.

The protein localises to the cytoplasm. It catalyses the reaction tRNA(Asn) + L-asparagine + ATP = L-asparaginyl-tRNA(Asn) + AMP + diphosphate + H(+). This is Asparagine--tRNA ligase from Staphylococcus aureus (strain bovine RF122 / ET3-1).